Consider the following 267-residue polypeptide: Indole-3-glycerol phosphate synthase (267 aa).

This sequence belongs to the TrpC family.

It catalyses the reaction 1-(2-carboxyphenylamino)-1-deoxy-D-ribulose 5-phosphate + H(+) = (1S,2R)-1-C-(indol-3-yl)glycerol 3-phosphate + CO2 + H2O. The protein operates within amino-acid biosynthesis; L-tryptophan biosynthesis; L-tryptophan from chorismate: step 4/5. The sequence is that of Indole-3-glycerol phosphate synthase from Cupriavidus necator (strain ATCC 17699 / DSM 428 / KCTC 22496 / NCIMB 10442 / H16 / Stanier 337) (Ralstonia eutropha).